Reading from the N-terminus, the 55-residue chain is Conotoxin Cal22c (55 aa).

Residues 1–5 (GRPSA) constitute a propeptide that is removed on maturation.

In terms of processing, contains 4 disulfide bonds. Expressed by the venom duct.

It is found in the secreted. Functionally, probable neurotoxin with unknown target. Possibly targets ion channels. This Californiconus californicus (California cone) protein is Conotoxin Cal22c.